A 49-amino-acid chain; its full sequence is uncharacterized protein (49 aa).

Residues 22 to 42 traverse the membrane as a helical segment; that stretch reads AIVGISIMIIIAIGIYLIIEY.

It localises to the membrane. This is an uncharacterized protein from Methanocaldococcus jannaschii (strain ATCC 43067 / DSM 2661 / JAL-1 / JCM 10045 / NBRC 100440) (Methanococcus jannaschii).